The following is a 751-amino-acid chain: Catalase-peroxidase (751 aa).

Positions 92–240 (WHSAGTYRVT…VAAAHMGLIY (149 aa)) form a cross-link, tryptophyl-tyrosyl-methioninium (Trp-Tyr) (with M-266). His93 serves as the catalytic Proton acceptor. A cross-link (tryptophyl-tyrosyl-methioninium (Tyr-Met) (with W-92)) is located at residues 240-266 (YVNPEGPDGVPDPIAAARDIRTTFHRM). A heme b-binding site is contributed by His281.

It belongs to the peroxidase family. Peroxidase/catalase subfamily. Homodimer or homotetramer. It depends on heme b as a cofactor. Formation of the three residue Trp-Tyr-Met cross-link is important for the catalase, but not the peroxidase activity of the enzyme.

The protein localises to the cytoplasm. The catalysed reaction is H2O2 + AH2 = A + 2 H2O. It catalyses the reaction 2 H2O2 = O2 + 2 H2O. Bifunctional enzyme with both catalase and broad-spectrum peroxidase activity. This is Catalase-peroxidase from Phaeosphaeria nodorum (strain SN15 / ATCC MYA-4574 / FGSC 10173) (Glume blotch fungus).